We begin with the raw amino-acid sequence, 221 residues long: Hydrogenase expression/formation protein HupD (221 aa).

Glu-20, Asp-66, and His-97 together coordinate Ni(2+).

The protein belongs to the peptidase A31 family.

Its function is as follows. Not known. Could be involved in the processing of hydrogenase. This chain is Hydrogenase expression/formation protein HupD (hupD), found in Thiocapsa roseopersicina.